We begin with the raw amino-acid sequence, 212 residues long: Cytidylate kinase (212 aa).

Residue 9 to 17 coordinates ATP; the sequence is GPAAAGKGT.

This sequence belongs to the cytidylate kinase family. Type 1 subfamily.

The protein localises to the cytoplasm. The enzyme catalyses CMP + ATP = CDP + ADP. It catalyses the reaction dCMP + ATP = dCDP + ADP. This Rhizobium meliloti (strain 1021) (Ensifer meliloti) protein is Cytidylate kinase.